Here is a 220-residue protein sequence, read N- to C-terminus: pH-response regulator palI/RIM9 homolog 1 (220 aa).

The Cytoplasmic portion of the chain corresponds to 1-5; sequence MSHFK. Residues 6 to 26 traverse the membrane as a helical segment; it reads IVFLTSLSLALVFELFNTISV. The Extracellular portion of the chain corresponds to 27–89; sequence PITSHLFISE…NHAKYALSKL (63 aa). Residues 90–110 traverse the membrane as a helical segment; that stretch reads LLVHVLSFVCVLVFWLFAILI. The Cytoplasmic segment spans residues 111 to 121; it reads CIKWLNTSKSV. Residues 122 to 142 traverse the membrane as a helical segment; the sequence is LLFAVGWSMVTFMVSLLGFLI. Residues 143–155 lie on the Extracellular side of the membrane; that stretch reads DVLMFASHVTWSS. Residues 156 to 176 form a helical membrane-spanning segment; sequence WLMLVSAFFVALSGILLCLMI. The Cytoplasmic segment spans residues 177 to 220; that stretch reads RDLSYRRFVKLQGEVDVCVPMTEPRDPDELNEIWKKKTSKREIL.

This sequence belongs to the palI/RIM9 family.

It is found in the cell membrane. Its function is as follows. Required for the proteolytic cleavage of the transcription factor RIM101 in response to alkaline ambient pH. This chain is pH-response regulator palI/RIM9 homolog 1, found in Kluyveromyces lactis (strain ATCC 8585 / CBS 2359 / DSM 70799 / NBRC 1267 / NRRL Y-1140 / WM37) (Yeast).